Here is a 1578-residue protein sequence, read N- to C-terminus: FH1/FH2 domain-containing protein 3 (1578 aa).

In terms of domain architecture, GBD/FH3 spans 18–405 (NSTNFPEPSR…DLCEKDEEEE (388 aa)). Disordered stretches follow at residues 324-518 (HEDG…DKLP), 535-824 (SPLL…GVNG), 915-942 (VGRG…KTES), 979-1013 (LGHR…VPPP), 1418-1462 (QQKQ…YAED), 1490-1514 (RTRS…PSVT), and 1528-1565 (SATQ…PEEA). Phosphoserine is present on residues Ser-345 and Ser-376. Polar residues predominate over residues 368–383 (IQNIKSPLSAPTSPCS). The span at 399 to 425 (EKDEEEEEEEEQPITEPNSEEEREDDA) shows a compositional bias: acidic residues. Thr-413 carries the post-translational modification Phosphothreonine. Residues 434–446 (ASSASGQSSPGKD) show a composition bias toward low complexity. Residues 453 to 473 (ALHTTSSPTSQGRWLSASTAA) show a composition bias toward polar residues. Residues 553 to 583 (SNFSSNSFQSSRPSPGPSGSPSYASSFSSPQ) are compositionally biased toward low complexity. Polar residues predominate over residues 584–598 (DTRSSPSGLLTSSFR). Positions 597–645 (FRQHQESLAAERERRRQEREERLQRIEREERNKFNREYLDKREEQRQAR) form a coiled coil. Basic and acidic residues predominate over residues 599-651 (QHQESLAAERERRRQEREERLQRIEREERNKFNREYLDKREEQRQARGERYKY). Low complexity-rich tracts occupy residues 675–684 (DLSLDLSLPA) and 692–701 (SSQSPSADSQ). Residues 751 to 761 (SQEEPVLELEP) are compositionally biased toward acidic residues. Basic and acidic residues predominate over residues 762–782 (EERASLSEKERQNEEVNERDN). Over residues 784 to 793 (SASSISSSSS) the composition is skewed to low complexity. A compositionally biased stretch (basic and acidic residues) spans 795 to 809 (LEREEKEDKLSEDRA). The residue at position 921 (Ser-921) is a Phosphoserine. Thr-933 carries the post-translational modification Phosphothreonine. Residues 985 to 1013 (PGPPPPPPPTFLGLPPPPPPPLLDSVPPP) are compositionally biased toward pro residues. One can recognise an FH1 domain in the interval 985–1016 (PGPPPPPPPTFLGLPPPPPPPLLDSVPPPPVP). The FH2 domain occupies 1039-1435 (GQPAFTKKKK…HRERNKTRGK (397 aa)). Basic residues predominate over residues 1420–1434 (KQKRANHRERNKTRG). A compositionally biased stretch (low complexity) spans 1444–1456 (SGSSPAAPSQPQG). In terms of domain architecture, DAD spans 1515-1547 (DDAADEIMDRIVKSATQVPSQRVVPRERKRSRA). Basic residues predominate over residues 1541–1556 (ERKRSRANRKSLRRTL).

This sequence belongs to the formin homology family. Interacts with nestin/NES-based interfilament (IF). Interacts with SQSTM1. As to expression, expressed in the heart, including left ventricle, kidney, brain and skeletal muscle, including soleus and tibialis anterior (at protein level).

The protein resides in the cytoplasm. It localises to the cytoskeleton. The protein localises to the myofibril. Its subcellular location is the sarcomere. It is found in the z line. Its function is as follows. May play a role in actin filament polymerization in cardiomyocytes. Actin-organizing protein that may cause stress fiber formation together with cell elongation. This Mus musculus (Mouse) protein is FH1/FH2 domain-containing protein 3 (Fhod3).